A 150-amino-acid polypeptide reads, in one-letter code: Large ribosomal subunit protein bL9 (150 aa).

Belongs to the bacterial ribosomal protein bL9 family.

Binds to the 23S rRNA. The polypeptide is Large ribosomal subunit protein bL9 (Streptococcus pyogenes serotype M18 (strain MGAS8232)).